The chain runs to 222 residues: Large ribosomal subunit protein uL1 (222 aa).

It belongs to the universal ribosomal protein uL1 family. In terms of assembly, part of the 50S ribosomal subunit.

Functionally, binds directly to 23S rRNA. Probably involved in E site tRNA release. Its function is as follows. Protein L1 is also a translational repressor protein, it controls the translation of its operon by binding to its mRNA. This is Large ribosomal subunit protein uL1 from Pyrobaculum aerophilum (strain ATCC 51768 / DSM 7523 / JCM 9630 / CIP 104966 / NBRC 100827 / IM2).